Here is a 165-residue protein sequence, read N- to C-terminus: MNSLENLILVGVIKSCHGIKGHVILKSFTEPATKILAKNLVNESREDIHIQLISQNAKGELICRFNDITTRNEAENLKGYKIFCLRASLPEPAEDEFYIADLNHLPVLDPNHKEIGKIKNILNFGAGDIIEIEFLDQTTELLPFNKEFFPVITKDYVTLNYQRGV.

One can recognise a PRC barrel domain in the interval 94–163 (EDEFYIADLN…KDYVTLNYQR (70 aa)).

Belongs to the RimM family. As to quaternary structure, binds ribosomal protein uS19.

Its subcellular location is the cytoplasm. In terms of biological role, an accessory protein needed during the final step in the assembly of 30S ribosomal subunit, possibly for assembly of the head region. Essential for efficient processing of 16S rRNA. May be needed both before and after RbfA during the maturation of 16S rRNA. It has affinity for free ribosomal 30S subunits but not for 70S ribosomes. The protein is Ribosome maturation factor RimM of Rickettsia akari (strain Hartford).